Consider the following 378-residue polypeptide: UDP-N-acetylglucosamine--N-acetylmuramyl-(pentapeptide) pyrophosphoryl-undecaprenol N-acetylglucosamine transferase (378 aa).

UDP-N-acetyl-alpha-D-glucosamine-binding positions include 14-16, asparagine 125, arginine 165, serine 193, and glutamine 293; that span reads TGG.

It belongs to the glycosyltransferase 28 family. MurG subfamily.

Its subcellular location is the cell inner membrane. It catalyses the reaction di-trans,octa-cis-undecaprenyl diphospho-N-acetyl-alpha-D-muramoyl-L-alanyl-D-glutamyl-meso-2,6-diaminopimeloyl-D-alanyl-D-alanine + UDP-N-acetyl-alpha-D-glucosamine = di-trans,octa-cis-undecaprenyl diphospho-[N-acetyl-alpha-D-glucosaminyl-(1-&gt;4)]-N-acetyl-alpha-D-muramoyl-L-alanyl-D-glutamyl-meso-2,6-diaminopimeloyl-D-alanyl-D-alanine + UDP + H(+). It functions in the pathway cell wall biogenesis; peptidoglycan biosynthesis. Functionally, cell wall formation. Catalyzes the transfer of a GlcNAc subunit on undecaprenyl-pyrophosphoryl-MurNAc-pentapeptide (lipid intermediate I) to form undecaprenyl-pyrophosphoryl-MurNAc-(pentapeptide)GlcNAc (lipid intermediate II). The chain is UDP-N-acetylglucosamine--N-acetylmuramyl-(pentapeptide) pyrophosphoryl-undecaprenol N-acetylglucosamine transferase from Bartonella tribocorum (strain CIP 105476 / IBS 506).